We begin with the raw amino-acid sequence, 201 residues long: RILP-like protein 2 (201 aa).

One can recognise an RH1 domain in the interval 14–108; the sequence is SPEMALDKDP…LRDGPQMGVG (95 aa). Positions 67-155 form a coiled coil; the sequence is LEMLEALVNQ…AQDELQCYKS (89 aa). The RH2 domain occupies 121 to 197; sequence RPRFTLQELR…TVKSLFSFKQ (77 aa). Residues 175-201 are disordered; sequence TSSPRSNASKEKSTVKSLFSFKQGKNT.

It belongs to the RILPL family.

Its subcellular location is the cytoplasm. It is found in the cytosol. The protein resides in the cytoskeleton. It localises to the microtubule organizing center. The protein localises to the centrosome. Its subcellular location is the cell projection. It is found in the cilium. In terms of biological role, involved in cell shape and neuronal morphogenesis, positively regulating the establishment and maintenance of dendritic spines. Plays a role in cellular protein transport. The chain is RILP-like protein 2 (rilpl2) from Xenopus laevis (African clawed frog).